The chain runs to 554 residues: Glucose-6-phosphate isomerase (554 aa).

The active-site Proton donor is the Glu359. Active-site residues include His390 and Lys518.

Belongs to the GPI family.

Its subcellular location is the cytoplasm. It catalyses the reaction alpha-D-glucose 6-phosphate = beta-D-fructose 6-phosphate. It functions in the pathway carbohydrate biosynthesis; gluconeogenesis. Its pathway is carbohydrate degradation; glycolysis; D-glyceraldehyde 3-phosphate and glycerone phosphate from D-glucose: step 2/4. Its function is as follows. Catalyzes the reversible isomerization of glucose-6-phosphate to fructose-6-phosphate. The chain is Glucose-6-phosphate isomerase from Pseudomonas syringae pv. tomato (strain ATCC BAA-871 / DC3000).